The sequence spans 186 residues: ADP-ribosylation factor-like protein 8B (186 aa).

Residues 1–19 (MLALISRLLDWFRSLFWKE) constitute an intramembrane region (note=Mediates targeting to membranes). Residues 29–35 (QYSGKTT), 71–75 (DIGGQ), and 130–133 (NKRD) each bind GTP. A Glycyl lysine isopeptide (Lys-Gly) (interchain with G-Cter in ubiquitin) cross-link involves residue lysine 141.

Belongs to the small GTPase superfamily. Arf family. In terms of assembly, interacts with tubulin. Interacts with BORCS5; recruits ARL8B to lysosomes. Interacts with VPS41; the interaction mediates the recruitment of the HOPS complex to lysosomes. Interacts (GTP-bound form) with PLEKHM2 (via RUN domain); the interaction is required to recruit the motor protein kinesin-1 on lysosomes. Interacts (GTP-bound form) with PLEKHM1 (via RUN domain); the interaction is required for PLEKHM1 localization to lysosomes and for ARL8B function in delivery and degradation of endocytic and autophagic cargo in lysosomes. PLEKHM1 and PLEKHM2 compete for interaction with ARL8B. Interacts (GTP-bound form) with RUFY1; the interaction is required for RUFY1 endosomal location. When GTP-bound, interacts with RUFY3 and RUFY4, but not with RUFY1, nor RUFY2. In terms of processing, ubiquitinated at Lys-141 by RNF167, leading to its degradation.

The protein localises to the late endosome membrane. Its subcellular location is the lysosome membrane. The protein resides in the cytoplasm. It localises to the cytoskeleton. It is found in the spindle. The protein localises to the cell projection. Its subcellular location is the axon. The protein resides in the synapse. It localises to the cytolytic granule membrane. It is found in the early endosome membrane. The catalysed reaction is GTP + H2O = GDP + phosphate + H(+). Functionally, small GTPase which cycles between active GTP-bound and inactive GDP-bound states. In its active state, binds to a variety of effector proteins playing a key role in the regulation of lysosomal positioning which is important for nutrient sensing, natural killer cell-mediated cytotoxicity and antigen presentation. Along with its effectors, orchestrates lysosomal transport and fusion. Localizes specifically to lysosomal membranes and mediates anterograde lysosomal motility by recruiting PLEKHM2, which in turn recruits the motor protein kinesin-1 on lysosomes. Required for lysosomal and cytolytic granule exocytosis. Critical factor involved in NK cell-mediated cytotoxicity. Drives the polarization of cytolytic granules and microtubule-organizing centers (MTOCs) toward the immune synapse between effector NK lymphocytes and target cells. In neurons, mediates the anterograde axonal long-range transport of presynaptic lysosome-related vesicles required for presynaptic biogenesis and synaptic function. Also acts as a regulator of endosome to lysosome trafficking pathways of special significance for host defense. Recruits RUFY1 onto early endosomes regulating endosomes to trans-Golgi network proteins retrieval. Regulates cargo trafficking to lysosomes by binding to PLEKHM1 and recruiting the HOPS subunit VPS41, resulting in functional assembly of the HOPS complex on lysosomal membranes. Plays an important role in cargo delivery to lysosomes for antigen presentation and microbial killing. Directs the intersection of CD1d with lipid antigens in lysosomes, and plays a role in intersecting phagosomes with lysosomes to generate phagolysosomes that kill microbes. Involved in the process of MHC II presentation. Regulates the delivery of antigens to lysosomes and the formation of MHC II-peptide complexes through the recruitment of the HOPS complex to lysosomes allowing the fusion of late endosomes to lysosomes. May play a role in chromosome segregation. This is ADP-ribosylation factor-like protein 8B (ARL8B) from Macaca fascicularis (Crab-eating macaque).